The sequence spans 1153 residues: ATP-dependent helicase/deoxyribonuclease subunit B (1153 aa).

Residue 8 to 15 (GRAGSGKS) coordinates ATP. C786, C1104, C1107, and C1113 together coordinate [4Fe-4S] cluster.

It belongs to the helicase family. AddB/RexB type 1 subfamily. Heterodimer of AddA and AddB. It depends on Mg(2+) as a cofactor. Requires [4Fe-4S] cluster as cofactor.

Its function is as follows. The heterodimer acts as both an ATP-dependent DNA helicase and an ATP-dependent, dual-direction single-stranded exonuclease. Recognizes the chi site generating a DNA molecule suitable for the initiation of homologous recombination. The AddB subunit has 5' -&gt; 3' nuclease activity but not helicase activity. In Clostridium acetobutylicum (strain ATCC 824 / DSM 792 / JCM 1419 / IAM 19013 / LMG 5710 / NBRC 13948 / NRRL B-527 / VKM B-1787 / 2291 / W), this protein is ATP-dependent helicase/deoxyribonuclease subunit B.